The primary structure comprises 493 residues: MAKIMIQGTASSVGKSLIVAALCRIFKQDGYSVCPFKSQNMSLNSYITLDGKEMGRAQVLQAYAAGLEPEVYMNPILLKPTSDKKCQIIVNGKVYGNSTAMGYHNLKLKFKNMLKGHFNKLEEDFDIVVMEGAGSPAEINLRDRDIVNMGMAELVDAPVLLVGDIDKGGVFASLAGTMLLLNEGEKKRVKGTIINKFRGDVEILKPGLDMLEDIIHIPCLGVVPYTRLQLEDEDGAVEFNKKAYAPIDIAVIKMPHISNFTDLDALKSEEDVSIRFITSKEEFKEPDLLVIPGSKNTIEDLLYLRKCGLEESIKEYSKDGKIIGICGGYQVLGSKIKDPHNVETDLGEIDGLNLLDMETTFEKEKVTTRVSAKLLNEETKNTVYGYEIHMGISKYGENIKPLFKIYDKNGEKVDYFDGAINEKGNVMGTYIHGVFDGVVFREKIINELRVKKGLKKKKSQMYEHMREKELDKLADIVRHSLDMEKIYSIIGMK.

In terms of domain architecture, GATase cobBQ-type spans 246-440; sequence PIDIAVIKMP…IHGVFDGVVF (195 aa). Cysteine 326 acts as the Nucleophile in catalysis. Residue histidine 432 is part of the active site.

It belongs to the CobB/CobQ family. CobQ subfamily.

The protein operates within cofactor biosynthesis; adenosylcobalamin biosynthesis. Its function is as follows. Catalyzes amidations at positions B, D, E, and G on adenosylcobyrinic A,C-diamide. NH(2) groups are provided by glutamine, and one molecule of ATP is hydrogenolyzed for each amidation. This Clostridium botulinum (strain Kyoto / Type A2) protein is Cobyric acid synthase.